A 501-amino-acid polypeptide reads, in one-letter code: Serine/threonine protein phosphatase 2A 55 kDa regulatory subunit B beta isoform (501 aa).

Position 1 is an N-acetylmethionine (Met1). WD repeat units follow at residues 34–73, 110–151, 220–258, 269–309, and 328–366; these read QEVDIISAIEFDKSGDHLATGDRGGRVVLFERTDTKDHGG, EIEE…IKKI, AHDYHINSISNSSDGETFISADDLRVNLWNLEISNQSFN, DLTE…LCDS, and EIIASISDIKFSKDGRYILSRDYMTLKLWDINMDSGPVA. Over residues 439–449 the composition is skewed to polar residues; sequence TPARPSRSIGS. Residues 439–466 form a disordered region; the sequence is TPARPSRSIGSMTRVVRRGSESPGTEAN. The WD 6 repeat unit spans residues 471–501; that stretch reads DFTTKLLHMAWHPTENSIACAAANSLYMYYA.

Belongs to the phosphatase 2A regulatory subunit B family. As to quaternary structure, PP2A consists of a common heteromeric enzyme, composed of a catalytic subunit (subunits C), a constant regulatory subunit (subunit A), and a variety of regulatory subunits such as subunits B (the R2/B/PR55/B55, R3/B''/PR72/PR130/PR59 and R5/B'/B56 families). Interacts with SIC/RON3. In terms of tissue distribution, expressed ubiquitously.

In terms of biological role, the B regulatory subunit may modulate substrate selectivity and catalytic activity, and may also direct the localization of the catalytic enzyme to a particular subcellular compartment. The polypeptide is Serine/threonine protein phosphatase 2A 55 kDa regulatory subunit B beta isoform (PP2AB2) (Arabidopsis thaliana (Mouse-ear cress)).